Reading from the N-terminus, the 219-residue chain is 2-hydroxy-3-keto-5-methylthiopentenyl-1-phosphate phosphatase (219 aa).

It belongs to the HAD-like hydrolase superfamily. MtnX family.

It catalyses the reaction 2-hydroxy-5-methylsulfanyl-3-oxopent-1-enyl phosphate + H2O = 1,2-dihydroxy-5-(methylsulfanyl)pent-1-en-3-one + phosphate. Its pathway is amino-acid biosynthesis; L-methionine biosynthesis via salvage pathway; L-methionine from S-methyl-5-thio-alpha-D-ribose 1-phosphate: step 4/6. Its function is as follows. Dephosphorylates 2-hydroxy-3-keto-5-methylthiopentenyl-1-phosphate (HK-MTPenyl-1-P) yielding 1,2-dihydroxy-3-keto-5-methylthiopentene (DHK-MTPene). The protein is 2-hydroxy-3-keto-5-methylthiopentenyl-1-phosphate phosphatase of Bacillus cereus (strain ATCC 14579 / DSM 31 / CCUG 7414 / JCM 2152 / NBRC 15305 / NCIMB 9373 / NCTC 2599 / NRRL B-3711).